The sequence spans 164 residues: Class I hydrophobin rodA (164 aa).

An N-terminal signal peptide occupies residues 1-18 (MQFSISALVLGLAATVYA). Asparagine 50 carries N-linked (GlcNAc...) asparagine glycosylation. Disulfide bonds link cysteine 60-cysteine 138, cysteine 68-cysteine 132, cysteine 69-cysteine 109, and cysteine 139-cysteine 157.

It belongs to the fungal hydrophobin family. As to quaternary structure, self-assembles to form functional amyloid fibrils called rodlets. Self-assembly into fibrillar rodlets occurs spontaneously at hydrophobic:hydrophilic interfaces and the rodlets further associate laterally to form amphipathic monolayers.

The protein localises to the secreted. Its subcellular location is the cell wall. Functionally, aerial growth, conidiation, and dispersal of filamentous fungi in the environment rely upon a capability of their secreting small amphipathic proteins called hydrophobins (HPBs) with low sequence identity. Class I can self-assemble into an outermost layer of rodlet bundles on aerial cell surfaces, conferring cellular hydrophobicity that supports fungal growth, development and dispersal; whereas Class II form highly ordered films at water-air interfaces through intermolecular interactions but contribute nothing to the rodlet structure. RodA is a class I hydrophobin involved in the cell surface hydrophobicity. The surface rodlet layer of the conidial cell wall makes airborne conidia of filamentous fungi inert to both innate and adaptive immunity. This chain is Class I hydrophobin rodA, found in Penicillium camemberti (strain FM 013).